A 472-amino-acid chain; its full sequence is Adenosylhomocysteinase (472 aa).

Substrate-binding residues include Thr62, Asp137, and Glu197. 198 to 200 is an NAD(+) binding site; it reads TTT. Substrate contacts are provided by Lys227 and Asp231. NAD(+) contacts are provided by residues Asn232, 261–266, Glu284, Asn319, 340–342, and Asn385; these read GYGDVG and IGH.

The protein belongs to the adenosylhomocysteinase family. Requires NAD(+) as cofactor.

The protein resides in the cytoplasm. The enzyme catalyses S-adenosyl-L-homocysteine + H2O = L-homocysteine + adenosine. It functions in the pathway amino-acid biosynthesis; L-homocysteine biosynthesis; L-homocysteine from S-adenosyl-L-homocysteine: step 1/1. Its function is as follows. May play a key role in the regulation of the intracellular concentration of adenosylhomocysteine. The protein is Adenosylhomocysteinase of Bordetella petrii (strain ATCC BAA-461 / DSM 12804 / CCUG 43448).